The chain runs to 380 residues: Omega-3 fatty acid desaturase, endoplasmic reticulum (380 aa).

A helical membrane pass occupies residues 59-78 (VLVVTALAASAISFNSWFFW). Positions 97–101 (HDCGH) match the Histidine box-1 motif. The Histidine box-2 motif lies at 133-137 (HRTHH). 2 helical membrane passes run 208–231 (GVVTSTLCWGIVLSVLLYLSLTIG) and 238–256 (LYGVPYLIFVMWLDFVTYL). A Histidine box-3 motif is present at residues 300 to 304 (HVIHH).

The protein belongs to the fatty acid desaturase type 1 family.

The protein localises to the endoplasmic reticulum membrane. The protein operates within lipid metabolism; polyunsaturated fatty acid biosynthesis. Its function is as follows. Microsomal (ER) omega-3 fatty acid desaturase introduces the third double bond in the biosynthesis of 18:3 fatty acids, important constituents of plant membranes. It is thought to use cytochrome b5 as an electron donor and to act on fatty acids esterified to phosphatidylcholine and, possibly, other phospholipids. This chain is Omega-3 fatty acid desaturase, endoplasmic reticulum (ARG1), found in Vigna radiata var. radiata (Mung bean).